The following is a 425-amino-acid chain: UPF0597 protein VIBHAR_03081 (425 aa).

This sequence belongs to the UPF0597 family.

The chain is UPF0597 protein VIBHAR_03081 from Vibrio campbellii (strain ATCC BAA-1116).